A 251-amino-acid polypeptide reads, in one-letter code: 3-deoxy-manno-octulosonate cytidylyltransferase (251 aa).

The protein belongs to the KdsB family.

The protein resides in the cytoplasm. It catalyses the reaction 3-deoxy-alpha-D-manno-oct-2-ulosonate + CTP = CMP-3-deoxy-beta-D-manno-octulosonate + diphosphate. It participates in nucleotide-sugar biosynthesis; CMP-3-deoxy-D-manno-octulosonate biosynthesis; CMP-3-deoxy-D-manno-octulosonate from 3-deoxy-D-manno-octulosonate and CTP: step 1/1. Its pathway is bacterial outer membrane biogenesis; lipopolysaccharide biosynthesis. Its function is as follows. Activates KDO (a required 8-carbon sugar) for incorporation into bacterial lipopolysaccharide in Gram-negative bacteria. This is 3-deoxy-manno-octulosonate cytidylyltransferase from Vibrio parahaemolyticus serotype O3:K6 (strain RIMD 2210633).